Consider the following 629-residue polypeptide: Chaperone protein HtpG (629 aa).

The a; substrate-binding stretch occupies residues M1–R336. The interval E337–R549 is b. The tract at residues M550–R629 is c.

The protein belongs to the heat shock protein 90 family. In terms of assembly, homodimer.

It localises to the cytoplasm. In terms of biological role, molecular chaperone. Has ATPase activity. This chain is Chaperone protein HtpG, found in Chlorobium chlorochromatii (strain CaD3).